The following is a 249-amino-acid chain: tRNA(Phe) (4-demethylwyosine(37)-C(7)) aminocarboxypropyltransferase (249 aa).

S-adenosyl-L-methionine-binding positions include serine 80, arginine 87, glutamate 127, and 154–155; that span reads DN.

This sequence belongs to the class I-like SAM-binding methyltransferase superfamily. TRM5/TYW2 family.

It is found in the cytoplasm. The catalysed reaction is 4-demethylwyosine(37) in tRNA(Phe) + S-adenosyl-L-methionine = 4-demethyl-7-[(3S)-3-amino-3-carboxypropyl]wyosine(37) in tRNA(Phe) + S-methyl-5'-thioadenosine + H(+). Functionally, S-adenosyl-L-methionine-dependent transferase that acts as a component of the wyosine derivatives biosynthesis pathway. Catalyzes the transfer of the alpha-amino-alpha-carboxypropyl (acp) group from S-adenosyl-L-methionine to 4-demethylwyosine (imG-14), forming 7-aminocarboxypropyl-demethylwyosine (wybutosine-86) at position 37 of tRNA(Phe). The protein is tRNA(Phe) (4-demethylwyosine(37)-C(7)) aminocarboxypropyltransferase of Methanocaldococcus jannaschii (strain ATCC 43067 / DSM 2661 / JAL-1 / JCM 10045 / NBRC 100440) (Methanococcus jannaschii).